The chain runs to 124 residues: Small ribosomal subunit protein uS12 (124 aa).

The residue at position 89 (D89) is a 3-methylthioaspartic acid. Residues 101–124 (TLDTSGVKDRRQSRSKYGAKAPKE) form a disordered region.

It belongs to the universal ribosomal protein uS12 family. In terms of assembly, part of the 30S ribosomal subunit. Contacts proteins S8 and S17. May interact with IF1 in the 30S initiation complex.

Its function is as follows. With S4 and S5 plays an important role in translational accuracy. Functionally, interacts with and stabilizes bases of the 16S rRNA that are involved in tRNA selection in the A site and with the mRNA backbone. Located at the interface of the 30S and 50S subunits, it traverses the body of the 30S subunit contacting proteins on the other side and probably holding the rRNA structure together. The combined cluster of proteins S8, S12 and S17 appears to hold together the shoulder and platform of the 30S subunit. This Synechococcus sp. (strain CC9902) protein is Small ribosomal subunit protein uS12.